The sequence spans 257 residues: Envelope glycoprotein (257 aa).

Residues 1–229 (FPILPGVWVD…EWAIHLLKGL (229 aa)) lie on the Extracellular side of the membrane. Residues asparagine 15, asparagine 58, and asparagine 68 are each glycosylated (N-linked (GlcNAc...) asparagine; by host). A fusion peptide region spans residues 95–115 (GPTARIFASILAPGVAAAQAL). Residues 112 to 162 (AQALREIERLACWSVKQANLTTSLLGDLLDDVTSIRHAVLQNRAAIDFLLL) are a coiled coil. A glycan (N-linked (GlcNAc...) asparagine; by host) is linked at asparagine 130. The interval 151-167 (LQNRAAIDFLLLAHGHG) is immunosuppression. Asparagine 178 carries N-linked (GlcNAc...) asparagine; by host glycosylation. Residues 180–210 (SDHSEAIQKKFQLMKEHVNKIGVDSDPIGSW) adopt a coiled-coil conformation. Residues 230 to 250 (LLGLVVILLLVVCLPCLLQFV) form a helical membrane-spanning segment. The S-palmitoyl cysteine; by host moiety is linked to residue cysteine 245. Over 251-257 (SSSTRKM) the chain is Cytoplasmic.

As to quaternary structure, the mature envelope protein (Env) consists of a trimer of SU-TM heterodimers attached by noncovalent interactions or by a labile interchain disulfide bond. Post-translationally, specific enzymatic cleavages in vivo yield mature proteins. Envelope glycoproteins are synthesized as an inactive precursor that is N-glycosylated and processed likely by host cell furin or by a furin-like protease in the Golgi to yield the mature SU and TM proteins. The cleavage site between SU and TM requires the minimal sequence [KR]-X-[KR]-R. In terms of processing, the transmembrane protein is palmitoylated.

Its subcellular location is the virion membrane. The protein localises to the host cell membrane. Functionally, the surface protein (SU) attaches the virus to the host cell by binding to its receptor. This interaction triggers the refolding of the transmembrane protein (TM) and is thought to activate its fusogenic potential by unmasking its fusion peptide. Fusion occurs at the host cell plasma membrane. Its function is as follows. The transmembrane protein (TM) acts as a class I viral fusion protein. Under the current model, the protein has at least 3 conformational states: pre-fusion native state, pre-hairpin intermediate state, and post-fusion hairpin state. During viral and target cell membrane fusion, the coiled coil regions (heptad repeats) assume a trimer-of-hairpins structure, positioning the fusion peptide in close proximity to the C-terminal region of the ectodomain. The formation of this structure appears to drive apposition and subsequent fusion of viral and target cell membranes. Membranes fusion leads to delivery of the nucleocapsid into the cytoplasm. In Galliformes, this protein is Envelope glycoprotein (env).